The primary structure comprises 421 residues: Histidine--tRNA ligase (421 aa).

Belongs to the class-II aminoacyl-tRNA synthetase family. As to quaternary structure, homodimer.

Its subcellular location is the cytoplasm. It carries out the reaction tRNA(His) + L-histidine + ATP = L-histidyl-tRNA(His) + AMP + diphosphate + H(+). The polypeptide is Histidine--tRNA ligase (Caldicellulosiruptor bescii (strain ATCC BAA-1888 / DSM 6725 / KCTC 15123 / Z-1320) (Anaerocellum thermophilum)).